A 427-amino-acid chain; its full sequence is MKDVSISSLENMKLKELYELARHYKISYYSKLTKKELIFAILKANAEQEDLLFMEGVLEIIQSEGFGFLRPINYSPSSEDIYISASQIRRFDLRNGDKVSGKVRPPKENERYYGLLHVEAVNGDDPESAKERVHFPALTPLYPDRQMVLETKPNFLSTRIMDMMAPVGFGQRGLIVAPPKAGKTMLLKEIANSITANQPEAELIVLLIDERPEEVTDIERSVAGDVVSSTFDEVPENHIKVAELVLERAMRLVEHKKDVIILMDSITRLARAYNLVIPPSGRTLSGGIDPAAFHRPKRFFGAARNIEEGGSLTILATALVDTGSRMDDVIYEEFKGTGNMELHLDRSLAERRIFPAIDIRRSGTRKEELLVPKEHLDRLWSIRKTMSDSPDFAEKFMRKMKKTKTNQEFFDILNQEWKQANLSSARR.

The Rho RNA-BD domain maps to 51 to 125 (LLFMEGVLEI…LHVEAVNGDD (75 aa)). Residues 168-173 (GFGQRG), 180-185 (KAGKTM), and Arg-211 each bind ATP.

The protein belongs to the Rho family. In terms of assembly, homohexamer. The homohexamer assembles into an open ring structure.

Its function is as follows. Facilitates transcription termination by a mechanism that involves Rho binding to the nascent RNA, activation of Rho's RNA-dependent ATPase activity, and release of the mRNA from the DNA template. The polypeptide is Transcription termination factor Rho (Bacillus subtilis (strain 168)).